The sequence spans 354 residues: Guanine nucleotide-binding protein G(i) subunit alpha-1 (354 aa).

Gly2 is lipidated: N-myristoyl glycine. A lipid anchor (S-palmitoyl cysteine) is attached at Cys3. The region spanning 32–354 (REVKLLLLGA…KNNLKDCGLF (323 aa)) is the G-alpha domain. The interval 35 to 48 (KLLLLGAGESGKST) is G1 motif. Residues 43 to 48 (ESGKST), 150 to 151 (DS), and 175 to 178 (LRTR) each bind GTP. Residue Ser47 coordinates Mg(2+). Positions 173–181 (DVLRTRVKT) are G2 motif. Thr181 contacts Mg(2+). The tract at residues 196–205 (FKMFDVGGQR) is G3 motif. GTP is bound by residues 200–204 (DVGGQ), 269–272 (NKKD), and Ala326. The G4 motif stretch occupies residues 265–272 (ILFLNKKD). Residues 324–329 (TCATDT) are G5 motif.

The protein belongs to the G-alpha family. G(i/o/t/z) subfamily. In terms of assembly, heterotrimeric G proteins are composed of 3 units; alpha, beta and gamma. The alpha chain contains the guanine nucleotide binding site. Part of a spindle orientation complex at least composed of GNAI1, GPSM2 and NUMA1. Identified in complex with the beta subunit GNB1 and the gamma subunit GNG1. Identified in complex with the beta subunit GNB1 and the gamma subunit GNG2. Component of the TAS2R14-GNAI1 complex, consisting of TAS2R14, GNAI1, GNB1 and GNG2; within the complex interacts with TAS2R14; this complex plays a role in the perception of bitterness. GTP binding causes dissociation of the heterotrimer, liberating the individual subunits so that they can interact with downstream effector proteins. Interacts (GDP-bound form) with GPSM1; this inhibits guanine nucleotide exchange and GTP binding. Interacts (GDP-bound form) with GPSM2 (via GoLoco domains); this inhibits guanine nucleotide exchange. Interacts with RGS10; this strongly enhances GTP hydrolysis. Interacts with RGS1 and RGS16; this strongly enhances GTPase activity. Interacts with RGS4. Interacts with RGS12. Interacts (via active GTP- or inactive GDP-bound forms) with RGS14 (via RGS and GoLoco domains). Interacts with RGS3, RGS6, RGS7, RGS8, RGS17, RGS18 and RGS20 (in vitro). Interacts (GDP-bound form) with RIC8A (via C-terminus); promoting GNAI1 folding and association with the plasma membrane. Interacts (inactive GDP-bound form) with NUCB1 (via GBA motif); the interaction leads to activation of GNAI1. Interacts (inactive GDP-bound form) with CCDC88C/DAPLE (via GBA motif); the interaction leads to activation of GNAI1. Interacts (inactive GDP-bound form) with CCDC8A/GIV (via GBA motif). In terms of processing, myristoylation at Gly-2 is required for membrane anchoring before palmitoylation. Post-translationally, palmitoylation at Cys-3 varies with membrane lipid composition. In terms of tissue distribution, mainly expressed in the brain, lung and kidney.

It localises to the nucleus. The protein resides in the cytoplasm. The protein localises to the cell membrane. Its subcellular location is the cytoskeleton. It is found in the microtubule organizing center. It localises to the centrosome. The protein resides in the cell cortex. The protein localises to the membrane. The enzyme catalyses GTP + H2O = GDP + phosphate + H(+). In terms of biological role, guanine nucleotide-binding proteins (G proteins) function as transducers downstream of G protein-coupled receptors (GPCRs) in numerous signaling cascades. The alpha chain contains the guanine nucleotide binding site and alternates between an active, GTP-bound state and an inactive, GDP-bound state. Signaling by an activated GPCR promotes GDP release and GTP binding. The alpha subunit has a low GTPase activity that converts bound GTP to GDP, thereby terminating the signal. Both GDP release and GTP hydrolysis are modulated by numerous regulatory proteins. Signaling is mediated via effector proteins, such as adenylate cyclase. Inhibits adenylate cyclase activity of ADCY1, ADCY5 and ADCY6, leading to decreased intracellular cAMP levels. The inactive GDP-bound form prevents the association of RGS14 with centrosomes and is required for the translocation of RGS14 from the cytoplasm to the plasma membrane. Required for normal cytokinesis during mitosis. Required for cortical dynein-dynactin complex recruitment during metaphase. This Cavia porcellus (Guinea pig) protein is Guanine nucleotide-binding protein G(i) subunit alpha-1 (GNAI1).